The following is a 314-amino-acid chain: Nerylneryl diphosphate synthase CPT2, chloroplastic (314 aa).

Residues 1–61 (MNSSIVSQHF…MSDRGLSKIS (61 aa)) constitute a chloroplast transit peptide. Residue D97 is part of the active site.

The protein belongs to the UPP synthase family. The cofactor is Mg(2+). In terms of tissue distribution, expressed in stems. Expressed in petiolules. Expressed at low levels in leaf trichomes, old leaf and roots.

The protein resides in the plastid. Its subcellular location is the chloroplast. It catalyses the reaction 3 isopentenyl diphosphate + dimethylallyl diphosphate = nerylneryl diphosphate + 3 diphosphate. It carries out the reaction isopentenyl diphosphate + dimethylallyl diphosphate = neryl diphosphate + diphosphate. The enzyme catalyses neryl diphosphate + isopentenyl diphosphate = (2Z,6Z)-farnesyl diphosphate + diphosphate. The catalysed reaction is (2Z,6Z)-farnesyl diphosphate + isopentenyl diphosphate = nerylneryl diphosphate + diphosphate. Its function is as follows. Uses dimethylallyl diphosphate and isopentenyl diphosphate to catalyze the cis-prenyl chain elongation and produce the 20 carbon product nerylneryl diphosphate. The polypeptide is Nerylneryl diphosphate synthase CPT2, chloroplastic (Solanum lycopersicum (Tomato)).